Reading from the N-terminus, the 881-residue chain is Ent-kaurene synthase CPS/KS, chloroplastic (881 aa).

Residues 1–41 constitute a chloroplast transit peptide; it reads MASSTLIQNRSCGVTSSMSSFQIFRGQPLRFPGTRTPAAVQ. Residues aspartate 417, aspartate 419, aspartate 635, aspartate 639, asparagine 778, aspartate 779, and glutamate 786 each contribute to the Mg(2+) site. Residues 417 to 422 carry the DXDDTA motif motif; the sequence is DVDDTA. A DDXXD motif motif is present at residues 635–639; that stretch reads DDYFD.

The protein belongs to the terpene synthase family. The cofactor is Mg(2+).

The protein resides in the plastid. It localises to the chloroplast. It carries out the reaction (2E,6E,10E)-geranylgeranyl diphosphate = ent-copalyl diphosphate. The enzyme catalyses ent-copalyl diphosphate = ent-kaur-16-ene + diphosphate. The catalysed reaction is ent-copalyl diphosphate = ent-beyerene + diphosphate. It catalyses the reaction ent-copalyl diphosphate = ent-sandaracopimara-8(14),15-diene + diphosphate. It carries out the reaction ent-copalyl diphosphate = ent-isokaurene + diphosphate. The enzyme catalyses ent-copalyl diphosphate + H2O = 16alpha-hydroxy-ent-kaurene + diphosphate. The protein operates within secondary metabolite biosynthesis; terpenoid biosynthesis. Functionally, bifunctional copalyl diphosphate/kaurene synthase involved in the biosynthesis of labdane-related diterpenoids (LRDs) natural products such as ent-beyerene, an antimicrobial compound. Supports the conversion of geranylgeranyl diphosphate (GGPP) to ent-copalyl diphosphate (ent-CDP). Also catalyzes the subsequent cyclization of ent-CDP into many diterpenes, including ent-kaur-16-ene as the major product, and ent-beyerene, ent-sandaracopimaradiene, ent-kaur-15-ene (ent-isokaurene) and 16-hydroxy-ent-kaurene (ent-16-alpha-hydroxy-kaurene) as minor products. The sequence is that of Ent-kaurene synthase CPS/KS, chloroplastic from Physcomitrium patens (Spreading-leaved earth moss).